Here is a 505-residue protein sequence, read N- to C-terminus: MSQRVYIFDTTLRDGEQSPGVSLNVGEKVQIARQLAKLGVDIIEAGFPITSPGDFKAVSEIARQVKGVTVAALARANFQDIDRAWEAVRHAEQPRIHTFIATSDIHLKYKLRMSREEVLDAAVAAVKRARAYTGDVEFSAEDASRSDLDFLCRVLAAAIEAGATVINIPDTVGYAVPEEWGKFINTIYHKVPGIEKVIVSVHCHNDLGMAVANSLAAVMNGARQVEGAINGIGERAGNAAIEEMVMALYTRKDQYNLYTNIKTEEIYRTSKLVSALTGMKVQPNKAVVGKNAFAHEAGIHQDGVLKERTTYEIMNPAMVGISKSNLVLGKHSGRHAFRHRLEEMGYNLSDEELNSAFERFKKLADKKMEITDEDLEAIIEEEMRLVPHTYTLEYLHISSGTTVVPTATVGLKRDGQLMEEAACGNGPVDAICKAIDKITGLNCTMTSWGINAVTAGKDALGDVSLKVTADGEKVYVGRGISTDVLEASAKAYVNAVNKLIWDSQK.

The Pyruvate carboxyltransferase domain occupies 5–267 (VYIFDTTLRD…YTNIKTEEIY (263 aa)). Mn(2+) contacts are provided by D14, H202, H204, and N238. The segment at 391 to 505 (TLEYLHISSG…VNKLIWDSQK (115 aa)) is regulatory domain.

This sequence belongs to the alpha-IPM synthase/homocitrate synthase family. LeuA type 1 subfamily. As to quaternary structure, homodimer. Requires Mn(2+) as cofactor.

The protein localises to the cytoplasm. The catalysed reaction is 3-methyl-2-oxobutanoate + acetyl-CoA + H2O = (2S)-2-isopropylmalate + CoA + H(+). It participates in amino-acid biosynthesis; L-leucine biosynthesis; L-leucine from 3-methyl-2-oxobutanoate: step 1/4. Catalyzes the condensation of the acetyl group of acetyl-CoA with 3-methyl-2-oxobutanoate (2-ketoisovalerate) to form 3-carboxy-3-hydroxy-4-methylpentanoate (2-isopropylmalate). This chain is 2-isopropylmalate synthase, found in Pelotomaculum thermopropionicum (strain DSM 13744 / JCM 10971 / SI).